Here is a 486-residue protein sequence, read N- to C-terminus: UDP-N-acetylmuramate--L-alanine ligase (486 aa).

ATP is bound at residue 126 to 132; it reads GTHGKTS.

This sequence belongs to the MurCDEF family.

It localises to the cytoplasm. It catalyses the reaction UDP-N-acetyl-alpha-D-muramate + L-alanine + ATP = UDP-N-acetyl-alpha-D-muramoyl-L-alanine + ADP + phosphate + H(+). Its pathway is cell wall biogenesis; peptidoglycan biosynthesis. In terms of biological role, cell wall formation. The chain is UDP-N-acetylmuramate--L-alanine ligase from Corynebacterium glutamicum (strain R).